A 113-amino-acid chain; its full sequence is Protein Rev (113 aa).

The interval 15–23 is homomultimerization; that stretch reads LIKFLYQSN. Residues 17-45 form a disordered region; the sequence is KFLYQSNPPPSPEGTRQARRNRRRRWRQR. The short motif at 31 to 47 is the Nuclear localization signal and RNA-binding (RRE) element; the sequence is TRQARRNRRRRWRQRQR. The segment covering 33-45 has biased composition (basic residues); it reads QARRNRRRRWRQR. The Nuclear export signal and binding to XPO1 signature appears at 70–81; that stretch reads LQLPPLERLTLD. Residues S89 and S96 each carry the phosphoserine; by host modification. Residues 89-113 are disordered; sequence SGTQGVGSPQILVESPTILESGTKE.

This sequence belongs to the HIV-1 REV protein family. Homomultimer; when bound to the RRE. Multimeric assembly is essential for activity and may involve XPO1. Binds to human KPNB1, XPO1, TNPO1, RANBP5 and IPO7. Interacts with the viral Integrase. Interacts with human KHDRBS1. Interacts with human NAP1; this interaction decreases Rev multimerization and stimulates its activity. Interacts with human DEAD-box helicases DDX3 and DDX24; these interactions may serve for viral RNA export to the cytoplasm and packaging, respectively. Interacts with human PSIP1; this interaction may inhibit HIV-1 DNA integration by promoting dissociation of the Integrase-LEDGF/p75 complex. In terms of processing, asymmetrically arginine dimethylated at one site by host PRMT6. Methylation impairs the RNA-binding activity and export of viral RNA from the nucleus to the cytoplasm. Phosphorylated by protein kinase CK2. Presence of, and maybe binding to the N-terminus of the regulatory beta subunit of CK2 is necessary for CK2-mediated Rev's phosphorylation.

The protein resides in the host nucleus. Its subcellular location is the host nucleolus. It localises to the host cytoplasm. In terms of biological role, escorts unspliced or incompletely spliced viral pre-mRNAs (late transcripts) out of the nucleus of infected cells. These pre-mRNAs carry a recognition sequence called Rev responsive element (RRE) located in the env gene, that is not present in fully spliced viral mRNAs (early transcripts). This function is essential since most viral proteins are translated from unspliced or partially spliced pre-mRNAs which cannot exit the nucleus by the pathway used by fully processed cellular mRNAs. Rev itself is translated from a fully spliced mRNA that readily exits the nucleus. Rev's nuclear localization signal (NLS) binds directly to KPNB1/Importin beta-1 without previous binding to KPNA1/Importin alpha-1. KPNB1 binds to the GDP bound form of RAN (Ran-GDP) and targets Rev to the nucleus. In the nucleus, the conversion from Ran-GDP to Ran-GTP dissociates Rev from KPNB1 and allows Rev's binding to the RRE in viral pre-mRNAs. Rev multimerization on the RRE via cooperative assembly exposes its nuclear export signal (NES) to the surface. Rev can then form a complex with XPO1/CRM1 and Ran-GTP, leading to nuclear export of the complex. Conversion from Ran-GTP to Ran-GDP mediates dissociation of the Rev/RRE/XPO1/RAN complex, so that Rev can return to the nucleus for a subsequent round of export. Beside KPNB1, also seems to interact with TNPO1/Transportin-1, RANBP5/IPO5 and IPO7/RANBP7 for nuclear import. The nucleoporin-like HRB/RIP is an essential cofactor that probably indirectly interacts with Rev to release HIV RNAs from the perinuclear region to the cytoplasm. This chain is Protein Rev, found in Human immunodeficiency virus type 1 group M subtype B (isolate JH32) (HIV-1).